A 99-amino-acid chain; its full sequence is Small ribosomal subunit protein bS20 (99 aa).

The segment covering 1 to 20 (MASAKPKKKNPRLASGRKRV) has biased composition (basic residues). Residues 1-21 (MASAKPKKKNPRLASGRKRVR) are disordered.

It belongs to the bacterial ribosomal protein bS20 family.

In terms of biological role, binds directly to 16S ribosomal RNA. The protein is Small ribosomal subunit protein bS20 of Verminephrobacter eiseniae (strain EF01-2).